Consider the following 961-residue polypeptide: Exportin-T (961 aa).

Belongs to the exportin family.

The protein localises to the cytoplasm. It localises to the nucleus. In terms of biological role, mediates the nuclear export of aminoacylated tRNAs. This is Exportin-T (xpot) from Danio rerio (Zebrafish).